Consider the following 107-residue polypeptide: Putative pterin-4-alpha-carbinolamine dehydratase (107 aa).

This sequence belongs to the pterin-4-alpha-carbinolamine dehydratase family.

The enzyme catalyses (4aS,6R)-4a-hydroxy-L-erythro-5,6,7,8-tetrahydrobiopterin = (6R)-L-erythro-6,7-dihydrobiopterin + H2O. The chain is Putative pterin-4-alpha-carbinolamine dehydratase from Rubrobacter xylanophilus (strain DSM 9941 / JCM 11954 / NBRC 16129 / PRD-1).